We begin with the raw amino-acid sequence, 133 residues long: ATP synthase epsilon chain, chloroplastic (133 aa).

Belongs to the ATPase epsilon chain family. In terms of assembly, F-type ATPases have 2 components, CF(1) - the catalytic core - and CF(0) - the membrane proton channel. CF(1) has five subunits: alpha(3), beta(3), gamma(1), delta(1), epsilon(1). CF(0) has three main subunits: a, b and c.

It is found in the plastid. The protein resides in the chloroplast thylakoid membrane. Functionally, produces ATP from ADP in the presence of a proton gradient across the membrane. The chain is ATP synthase epsilon chain, chloroplastic from Atropa belladonna (Belladonna).